We begin with the raw amino-acid sequence, 252 residues long: F-box/SPRY domain-containing protein 1 (252 aa).

In terms of domain architecture, F-box spans 1 to 48 (MVDPLCNYNVLEAIFSYLELNDLYRCSQVCKSWYHFLNDENSDVWRWH). Positions 58–250 (VKSDLLASVS…VSMVYLGTPL (193 aa)) constitute a B30.2/SPRY domain.

This sequence belongs to the FBXO45/Fsn family. In terms of assembly, component of an E3 ubiquitin ligase complex composed of hiw and Fsn.

Its subcellular location is the synapse. Its pathway is protein modification; protein ubiquitination. Functionally, required in the presynaptic motoneuron to down-regulate the levels of wnd and restrain synaptic terminal growth at the neuromuscular junction (NMJ). This is F-box/SPRY domain-containing protein 1 from Drosophila virilis (Fruit fly).